Here is a 190-residue protein sequence, read N- to C-terminus: ATP synthase subunit b 1 (190 aa).

The helical transmembrane segment at 35–55 (DFVVLLGFLLFLAILFYFGVP) threads the bilayer.

The protein belongs to the ATPase B chain family. As to quaternary structure, F-type ATPases have 2 components, F(1) - the catalytic core - and F(0) - the membrane proton channel. F(1) has five subunits: alpha(3), beta(3), gamma(1), delta(1), epsilon(1). F(0) has three main subunits: a(1), b(2) and c(10-14). The alpha and beta chains form an alternating ring which encloses part of the gamma chain. F(1) is attached to F(0) by a central stalk formed by the gamma and epsilon chains, while a peripheral stalk is formed by the delta and b chains.

It is found in the cell inner membrane. Functionally, f(1)F(0) ATP synthase produces ATP from ADP in the presence of a proton or sodium gradient. F-type ATPases consist of two structural domains, F(1) containing the extramembraneous catalytic core and F(0) containing the membrane proton channel, linked together by a central stalk and a peripheral stalk. During catalysis, ATP synthesis in the catalytic domain of F(1) is coupled via a rotary mechanism of the central stalk subunits to proton translocation. In terms of biological role, component of the F(0) channel, it forms part of the peripheral stalk, linking F(1) to F(0). The protein is ATP synthase subunit b 1 of Jannaschia sp. (strain CCS1).